The following is a 505-amino-acid chain: Apolipoprotein N-acyltransferase (505 aa).

The next 6 helical transmembrane spans lie at 26-46, 66-86, 89-109, 129-149, 161-181, and 186-206; these read FAPY…LILL, FATG…MPLI, LFLM…FAWL, LWLI…WLWL, FAPI…AGAL, and IHKQ…GFGI. The CN hydrolase domain maps to 225 to 471; sequence IQGNVDQNLK…TAVLRAELTP (247 aa). Glu264 serves as the catalytic Proton acceptor. Lys330 is an active-site residue. Cys382 (nucleophile) is an active-site residue. A helical transmembrane segment spans residues 481-501; the sequence is FGTWPLYFWVALSLMLAWWLP.

It belongs to the CN hydrolase family. Apolipoprotein N-acyltransferase subfamily.

The protein localises to the cell inner membrane. It catalyses the reaction N-terminal S-1,2-diacyl-sn-glyceryl-L-cysteinyl-[lipoprotein] + a glycerophospholipid = N-acyl-S-1,2-diacyl-sn-glyceryl-L-cysteinyl-[lipoprotein] + a 2-acyl-sn-glycero-3-phospholipid + H(+). Its pathway is protein modification; lipoprotein biosynthesis (N-acyl transfer). Functionally, catalyzes the phospholipid dependent N-acylation of the N-terminal cysteine of apolipoprotein, the last step in lipoprotein maturation. The chain is Apolipoprotein N-acyltransferase from Vibrio parahaemolyticus serotype O3:K6 (strain RIMD 2210633).